A 282-amino-acid polypeptide reads, in one-letter code: 4-hydroxy-tetrahydrodipicolinate reductase (282 aa).

Position 12 to 17 (12 to 17 (GVTGRM)) interacts with NAD(+). Arg44 provides a ligand contact to NADP(+). NAD(+) is bound by residues 107–109 (GTT) and 131–134 (SSNF). The Proton donor/acceptor role is filled by His164. A (S)-2,3,4,5-tetrahydrodipicolinate-binding site is contributed by His165. Lys168 acts as the Proton donor in catalysis. Position 174–175 (174–175 (GT)) interacts with (S)-2,3,4,5-tetrahydrodipicolinate.

Belongs to the DapB family. In terms of assembly, homotetramer.

Its subcellular location is the cytoplasm. It carries out the reaction (S)-2,3,4,5-tetrahydrodipicolinate + NAD(+) + H2O = (2S,4S)-4-hydroxy-2,3,4,5-tetrahydrodipicolinate + NADH + H(+). It catalyses the reaction (S)-2,3,4,5-tetrahydrodipicolinate + NADP(+) + H2O = (2S,4S)-4-hydroxy-2,3,4,5-tetrahydrodipicolinate + NADPH + H(+). It functions in the pathway amino-acid biosynthesis; L-lysine biosynthesis via DAP pathway; (S)-tetrahydrodipicolinate from L-aspartate: step 4/4. Functionally, catalyzes the conversion of 4-hydroxy-tetrahydrodipicolinate (HTPA) to tetrahydrodipicolinate. The sequence is that of 4-hydroxy-tetrahydrodipicolinate reductase from Blochmanniella pennsylvanica (strain BPEN).